The primary structure comprises 225 residues: UPF0758 protein Mhun_2739 (225 aa).

The region spanning 102-225 (RITEPDHILK…VTSLRSLGYL (124 aa)) is the MPN domain. Zn(2+) contacts are provided by histidine 174, histidine 176, and aspartate 187. Positions 174 to 187 (HNHPSGNPEPSSED) match the JAMM motif motif.

Belongs to the UPF0758 family.

The protein is UPF0758 protein Mhun_2739 of Methanospirillum hungatei JF-1 (strain ATCC 27890 / DSM 864 / NBRC 100397 / JF-1).